Here is a 424-residue protein sequence, read N- to C-terminus: MTSSNLIKQLQERGLVAQVTDEDALAERLAQGPISLYCGFDPTADSLHLGHLVPLLCLKRFQLAGHRPVALVGGATGMIGDPSFKASERKLNTEDTVNEWVEKIRHQVSPFLDFDCGENSAIAANNYDWFGGMNVLTFLRDIGKHFSVNQMINKEAVKQRLNRDDSGISFTEFSYNLLQAYDFACLNKNHGVALQIGGSDQWGNITSGIDLTRRLHQQQVYGLTVPLITKADGTKFGKTEGGAVWLDPKKTSPYKFYQFWINTADADVYRFLKFFTFMSLEEINALEEEDKNSGKAPRAQYVLAENVTGMVHGPEGLAAAKRITESLFSGDLHDMTEADFAQLAQDGMPTVELNRDADLQQALVNAELVPSRGQARTMIGSNAVAINGEKQADPEYVFTDADRLFGRYTLLRRGKKHYCLISWL.

Y37 is an L-tyrosine binding site. Residues 42–51 (PTADSLHLGH) carry the 'HIGH' region motif. Residues Y175 and Q179 each coordinate L-tyrosine. The short motif at 235–239 (KFGKT) is the 'KMSKS' region element. K238 serves as a coordination point for ATP. The S4 RNA-binding domain occupies 357 to 414 (ADLQQALVNAELVPSRGQARTMIGSNAVAINGEKQADPEYVFTDADRLFGRYTLLRRG).

Belongs to the class-I aminoacyl-tRNA synthetase family. TyrS type 1 subfamily. In terms of assembly, homodimer.

It is found in the cytoplasm. The enzyme catalyses tRNA(Tyr) + L-tyrosine + ATP = L-tyrosyl-tRNA(Tyr) + AMP + diphosphate + H(+). Its function is as follows. Catalyzes the attachment of tyrosine to tRNA(Tyr) in a two-step reaction: tyrosine is first activated by ATP to form Tyr-AMP and then transferred to the acceptor end of tRNA(Tyr). The sequence is that of Tyrosine--tRNA ligase from Yersinia pseudotuberculosis serotype O:1b (strain IP 31758).